Here is a 98-residue protein sequence, read N- to C-terminus: Large ribosomal subunit protein bL27 (98 aa).

Residues 1 to 9 (MLKMNLQLF) constitute a propeptide that is removed on maturation.

This sequence belongs to the bacterial ribosomal protein bL27 family. Post-translationally, the N-terminus is cleaved by ribosomal processing cysteine protease Prp.

This Desulfitobacterium hafniense (strain DSM 10664 / DCB-2) protein is Large ribosomal subunit protein bL27.